The primary structure comprises 614 residues: Probable zinc transporter protein DDB_G0269332 (614 aa).

Disordered stretches follow at residues 1-103 and 115-178; these read MSDI…LPHL and SSYN…NNEF. Residues 1–203 are Cytoplasmic-facing; it reads MSDINSNSYD…NLNRDSDAKK (203 aa). Low complexity predominate over residues 17–64; it reads QHQQESQYHPQQQQQQQQQQQQQQEYYNQQHQQESQYQQQSPPQQQYD. The span at 80 to 92 shows a compositional bias: basic residues; the sequence is GHGRSHNSGHGHS. A compositionally biased stretch (low complexity) spans 121–176; it reads NNSGDISNSNNNNNNNNQYNYNNNNNNNNYNNNINNNQFNSSVYNNNNNNNNNNNN. A helical membrane pass occupies residues 204–224; the sequence is LAAWISVMLVFTIYEIFYGAY. The Extracellular portion of the chain corresponds to 225-233; the sequence is LESLGLVSD. A helical transmembrane segment spans residues 234-254; it reads GFHALFDCIGMGIALLAMLVG. At 255 to 270 the chain is on the cytoplasmic side; that stretch reads KRGISNQEYTYGYDRW. The chain crosses the membrane as a helical span at residues 271 to 291; it reads EVLGTFSNGCFLLFVSFFLFL. Residues 292 to 306 lie on the Extracellular side of the membrane; that stretch reads ESIERLLEPPHIHNH. A helical transmembrane segment spans residues 307 to 327; the sequence is GRVMSLATISLIINIVGVLFF. Topologically, residues 328-351 are cytoplasmic; it reads KQKSNERKQQSSIRSENLLTISHH. The helical transmembrane segment at 352–372 threads the bilayer; that stretch reads ILVDSCTSLGVILSSLVGQAF. At 373–377 the chain is on the extracellular side; sequence GLEIS. Residues 378–398 form a helical membrane-spanning segment; the sequence is DSLISIIIACIIVYNALPICI. The Cytoplasmic portion of the chain corresponds to 399 to 614; the sequence is KTSAILLQTT…NSSHSHAHNH (216 aa). The tract at residues 483 to 614 is disordered; that stretch reads EGKHNSHSHG…NSSHSHAHNH (132 aa). 2 stretches are compositionally biased toward basic residues: residues 487 to 499 and 507 to 523; these read NSHSHGGAHHHPH and SHNHSHGHNHGHSHGHS. Residues 525-535 are compositionally biased toward basic and acidic residues; it reads GGNDDHEHGEN. Residues 548–567 are compositionally biased toward polar residues; that stretch reads VQPTSPFSSHYTDIHSNNTP. The segment covering 575 to 585 has biased composition (acidic residues); sequence QDDEDDEDDYD. The segment covering 586-599 has biased composition (basic and acidic residues); it reads HDEHHHDHDHDEHH. The span at 600 to 614 shows a compositional bias: basic residues; the sequence is HGHSHNSSHSHAHNH.

The protein belongs to the cation diffusion facilitator (CDF) transporter (TC 2.A.4) family. SLC30A subfamily.

It localises to the membrane. In terms of biological role, may be involved in zinc transport from the cytoplasm to either intracellular organelles or extracellular spaces. The protein is Probable zinc transporter protein DDB_G0269332 of Dictyostelium discoideum (Social amoeba).